A 518-amino-acid polypeptide reads, in one-letter code: Cytochrome P450 monooxygenase ARMGADRAFT_1018417 (518 aa).

The helical transmembrane segment at 3 to 23 threads the bilayer; that stretch reads LFSAYALAFSLLMIPLILYIL. C433 provides a ligand contact to heme. A glycan (N-linked (GlcNAc...) asparagine) is linked at N455.

The protein belongs to the cytochrome P450 family. Heme serves as cofactor.

The protein resides in the membrane. It participates in secondary metabolite biosynthesis. Functionally, cytochrome P450 monooxygenase, part of the gene cluster that mediates the biosynthesis of melleolides, a range of antifungal and phytotoxic polyketide derivatives composed of an orsellinic acid (OA) moiety esterified to various sesquiterpene alcohols. The first step in melleolides biosynthesis is performed by the delta(6)-protoilludene synthase PRO1 which catalyzes the cyclization of farnesyl diphosphate to protoilludene. The orsellinic acid synthase armB produces OA by condensing acetyl-CoA with 3 malonyl-CoA units in a three-round chain elongation reaction folowed by a C2-C7 ring closure. ArmB further catalyzes the trans-esterification of OA to the various sesquiterpene alcohols resulting from the hydroxylation of protoilludene. The melleolides cluster also includes 5 cytochrome P450 monooxygenases, 4 NAD(+)-dependent oxidoreductases, one flavin-dependent oxidoreductase, and one O-methyltransferase. The cytochrome P450 monooxygenases may be involved in protoilludene hydroxylation to elaborate melleolides with multiple alcohol groups, such as melleolide D, which carries alcohol functionalities at C-4, C-5, C-10, and C-13. The role of the NAD(+)-dependent enzymes remains unknown. Numerous melleolides, including arnamial, show 5'-O-methylation of the aromatic moiety which may be catalyzed by the methyltransferase encoded in the cluster. The flavin-dependent oxidoreductase might represent the dehydrogenase yielding the aldehyde in position 1 of arnamial and other melleolides. Finally, several halogenase localized outside of the cluster, are able to catalyze the transfer of a single chlorine atom to the melleolide backbone, resulting in a 6'-chloromelleolide product. In Armillaria gallica (Bulbous honey fungus), this protein is Cytochrome P450 monooxygenase ARMGADRAFT_1018417.